The chain runs to 225 residues: Insulin-induced gene 2 protein (225 aa).

At 1 to 28 (MAENDAKPTLPKKSGPYISSVTSHGMNL) the chain is on the cytoplasmic side. Residues 29 to 51 (VIRGIVLFFIGVFLALVLNLLQI) form a helical membrane-spanning segment. At 52-70 (QRNVTLFPPDVITSIFSSA) the chain is on the lumenal side. A helical membrane pass occupies residues 71–88 (WWVPPCCGTASAVIGLLY). The Cytoplasmic portion of the chain corresponds to 89–103 (PCMDRHLGEPHKFKR). The helical transmembrane segment at 104-126 (EWSSVMRCVAVFVGINHASAKVD) threads the bilayer. Over 127–129 (FAN) the chain is Lumenal. The chain crosses the membrane as a helical span at residues 130 to 148 (NIQLSLTLAALSIGLWWTF). At 149–153 (DRSRS) the chain is on the cytoplasmic side. The chain crosses the membrane as a helical span at residues 154–175 (GFGLGVGIAFLATLVSQLLVYN). At 176–189 (GVYQYTSPDFLYVR) the chain is on the lumenal side. Residues 190–207 (SWLPCIFFAGGITMGNIG) form a helical membrane-spanning segment. The Cytoplasmic segment spans residues 208–225 (RQLAMYECKVIAEKSHED). The KxHxx motif lies at 219–225 (AEKSHED).

Belongs to the INSIG family. As to quaternary structure, interacts with SCAP; interaction is direct and only takes place in the presence of sterols; it prevents interaction between SCAP and the coat protein complex II (COPII). Associates with the SCAP-SREBP complex; association is mediated via its interaction with SCAP and only takes place in the presence of sterols.

It localises to the endoplasmic reticulum membrane. Oxysterol-binding protein that mediates feedback control of cholesterol synthesis by controlling both endoplasmic reticulum to Golgi transport of SCAP and degradation of HMGCR. Acts as a negative regulator of cholesterol biosynthesis by mediating the retention of the SCAP-SREBP complex in the endoplasmic reticulum, thereby blocking the processing of sterol regulatory element-binding proteins (SREBPs). Binds oxysterol, including 22-hydroxycholesterol, 24-hydroxycholesterol, 25-hydroxycholesterol and 27-hydroxycholesterol, regulating interaction with SCAP and retention of the SCAP-SREBP complex in the endoplasmic reticulum. In presence of oxysterol, interacts with SCAP, retaining the SCAP-SREBP complex in the endoplasmic reticulum, thereby preventing SCAP from escorting SREBPs to the Golgi. Sterol deprivation reduces oxysterol-binding, disrupting the interaction between INSIG2 and SCAP, thereby promoting Golgi transport of the SCAP-SREBP complex, followed by processing and nuclear translocation of SREBPs. Also regulates cholesterol synthesis by regulating degradation of HMGCR. The sequence is that of Insulin-induced gene 2 protein from Gallus gallus (Chicken).